The chain runs to 150 residues: UPF0336 protein SGR_2883 (150 aa).

The region spanning 10–116 is the MaoC-like domain; the sequence is RTYPPTPAYE…STIEAVKSLA (107 aa).

Belongs to the UPF0336 family.

This chain is UPF0336 protein SGR_2883, found in Streptomyces griseus subsp. griseus (strain JCM 4626 / CBS 651.72 / NBRC 13350 / KCC S-0626 / ISP 5235).